The sequence spans 249 residues: MHTLVLVRHGQSVWNLENRFTGWTDVGLTPQGREEAAQAANLLRDGGYDFDACLTSVLSRAVMTLDILLTGLDRLWLPVTKSWRLNERHYGGLQGLNKAEMAAQYGEEQVFVWRRSYDTPPPALDPADERFPGRDRRYATLTDAELPRCESLKDTVARVMPFWHDVMAPAIASGTRLLVAAHGNSLRALVKYLDAIGDDAISECNIPTGVPLIYKLDASLKPLEHFYLGDAEAVARKAAAVAAQGKAKG.

Residues arginine 8–asparagine 15, threonine 21–glycine 22, arginine 60, glutamate 87–tyrosine 90, lysine 98, arginine 114–arginine 115, and glycine 183–asparagine 184 contribute to the substrate site. Catalysis depends on histidine 9, which acts as the Tele-phosphohistidine intermediate. Glutamate 87 (proton donor/acceptor) is an active-site residue.

Belongs to the phosphoglycerate mutase family. BPG-dependent PGAM subfamily. In terms of assembly, homodimer.

It catalyses the reaction (2R)-2-phosphoglycerate = (2R)-3-phosphoglycerate. The protein operates within carbohydrate degradation; glycolysis; pyruvate from D-glyceraldehyde 3-phosphate: step 3/5. Catalyzes the interconversion of 2-phosphoglycerate and 3-phosphoglycerate. The polypeptide is 2,3-bisphosphoglycerate-dependent phosphoglycerate mutase (Solidesulfovibrio magneticus (strain ATCC 700980 / DSM 13731 / RS-1) (Desulfovibrio magneticus)).